Consider the following 178-residue polypeptide: Adenine phosphoribosyltransferase (178 aa).

Belongs to the purine/pyrimidine phosphoribosyltransferase family. As to quaternary structure, homodimer.

The protein resides in the cytoplasm. The catalysed reaction is AMP + diphosphate = 5-phospho-alpha-D-ribose 1-diphosphate + adenine. Its pathway is purine metabolism; AMP biosynthesis via salvage pathway; AMP from adenine: step 1/1. Functionally, catalyzes a salvage reaction resulting in the formation of AMP, that is energically less costly than de novo synthesis. The polypeptide is Adenine phosphoribosyltransferase (Helicobacter hepaticus (strain ATCC 51449 / 3B1)).